The primary structure comprises 269 residues: tRNA pseudouridine synthase A (269 aa).

Aspartate 51 (nucleophile) is an active-site residue. Tyrosine 109 lines the substrate pocket.

This sequence belongs to the tRNA pseudouridine synthase TruA family. Homodimer.

The enzyme catalyses uridine(38/39/40) in tRNA = pseudouridine(38/39/40) in tRNA. Functionally, formation of pseudouridine at positions 38, 39 and 40 in the anticodon stem and loop of transfer RNAs. This Haemophilus influenzae (strain ATCC 51907 / DSM 11121 / KW20 / Rd) protein is tRNA pseudouridine synthase A.